The chain runs to 147 residues: Protein phosphatase 1 regulatory subunit 14B (147 aa).

The segment covering 1–15 (MADSGPAGGAALAAP) has biased composition (low complexity). Residues 1-55 (MADSGPAGGAALAAPAPGPGSGSTGPRVYFQSPPGAAGEGPGGADDDGPVRRQGK) form a disordered region. Alanine 2 is subject to N-acetylalanine. Serine 21 is subject to Phosphoserine. Residue tyrosine 29 is modified to Phosphotyrosine. Serine 32 bears the Phosphoserine mark. Phosphothreonine is present on threonine 57. Positions 61-103 (DRKELRKRLNLEEWILEQLTRLYDCQEEEIPELEIDVDELLDM) form a coiled coil.

This sequence belongs to the PP1 inhibitor family. Phosphorylated primarily on Thr-57 by PKC (in vitro). An unknown Ser is also phosphorylated by PKC (in vitro). In terms of tissue distribution, ubiquitous. Highly expressed in testis. Detected at low levels in the other tissues tested. Highly expressed in cardiac muscle, bladder and aorta (at protein level).

It is found in the cytoplasm. Its function is as follows. Inhibitor of PPP1CA. Has over 50-fold higher inhibitory activity when phosphorylated. In Mus musculus (Mouse), this protein is Protein phosphatase 1 regulatory subunit 14B (Ppp1r14b).